The sequence spans 179 residues: Cytoglobin-2 (179 aa).

In terms of domain architecture, Globin spans 18–167 (PLSDAEMEII…VYWHVTGAYT (150 aa)). The heme b site is built by H81 and H113.

It belongs to the globin family. In terms of assembly, monomeric.

It localises to the cytoplasm. The protein resides in the nucleus. The enzyme catalyses Fe(II)-heme b-[protein] + nitric oxide + O2 = Fe(III)-heme b-[protein] + nitrate. It carries out the reaction Fe(III)-heme b-[protein] + nitric oxide + H2O = Fe(II)-heme b-[protein] + nitrite + 2 H(+). The catalysed reaction is 2 superoxide + 2 H(+) = H2O2 + O2. It catalyses the reaction H2O2 + AH2 = A + 2 H2O. Probable multifunctional globin with a hexacoordinated heme iron required for the catalysis of various reactions depending on redox condition of the cell as well as oxygen availability. Has a nitric oxide dioxygenase (NOD) activity and is most probably involved in cell-mediated and oxygen-dependent nitric oxide consumption. Under normoxic conditions functions as a nitric oxide dioxygenase (NOD) but under hypoxic conditions the globin may switch its function to that of a nitrite (NO2) reductase (NiR), generating nitric oxide. Could also have peroxidase and superoxide dismutase activities, detoxifying reactive oxygen species and protecting cells against oxidative stress. Also binds dioxygen with low affinity and could function as an oxygen sensor but has probably no function as a respiratory oxygen carrier. The polypeptide is Cytoglobin-2 (Oryzias latipes (Japanese rice fish)).